Consider the following 509-residue polypeptide: Heat shock 70 kDa protein 14 (509 aa).

This sequence belongs to the heat shock protein 70 family. In terms of assembly, component of ribosome-associated complex (RAC), a heterodimer composed of Hsp70/DnaK-type chaperone HSPA14 and Hsp40/DnaJ-type chaperone DNAJC2.

It is found in the cytoplasm. Its subcellular location is the cytosol. Functionally, component of the ribosome-associated complex (RAC), a complex involved in folding or maintaining nascent polypeptides in a folding-competent state. In the RAC complex, binds to the nascent polypeptide chain, while DNAJC2 stimulates its ATPase activity. The sequence is that of Heat shock 70 kDa protein 14 (HSPA14) from Macaca fascicularis (Crab-eating macaque).